A 680-amino-acid chain; its full sequence is DNA-directed RNA polymerase subunit beta' (680 aa).

The Zn(2+) site is built by Cys-69, Cys-71, Cys-87, and Cys-90. The Mg(2+) site is built by Asp-489, Asp-491, and Asp-493.

This sequence belongs to the RNA polymerase beta' chain family. RpoC1 subfamily. In terms of assembly, in plastids the minimal PEP RNA polymerase catalytic core is composed of four subunits: alpha, beta, beta', and beta''. When a (nuclear-encoded) sigma factor is associated with the core the holoenzyme is formed, which can initiate transcription. Requires Mg(2+) as cofactor. Zn(2+) serves as cofactor.

It localises to the plastid. Its subcellular location is the chloroplast. The catalysed reaction is RNA(n) + a ribonucleoside 5'-triphosphate = RNA(n+1) + diphosphate. DNA-dependent RNA polymerase catalyzes the transcription of DNA into RNA using the four ribonucleoside triphosphates as substrates. The chain is DNA-directed RNA polymerase subunit beta' from Nandina domestica (Heavenly bamboo).